We begin with the raw amino-acid sequence, 669 residues long: CoB--CoM heterodisulfide reductase iron-sulfur subunit A 1 (669 aa).

153–176 (GGGIAGIQAALDLADQGFKVYLVE) is a binding site for FAD. Sec-200 is a non-standard amino acid (selenocysteine). 4Fe-4S ferredoxin-type domains follow at residues 239-270 (KKPRYVDEDACTGCGVCAEVCPIEVPNEFDLG), 287-318 (LVYTIDMEHCIQCGLCEEACPQDPPAIDFDQE), 584-613 (ITATVDEDVCGGCGACAQVCPFDAIEMVEK), and 617-646 (RVAEVQDVACQGCGQCAAACPSGAMQLRYY). [4Fe-4S] cluster contacts are provided by Cys-249, Cys-252, Cys-255, Cys-259, Cys-296, Cys-299, Cys-302, Cys-306, Cys-593, Cys-596, Cys-599, Cys-603, Cys-626, Cys-629, Cys-632, and Cys-636.

This sequence belongs to the HdrA family. In terms of assembly, the ferredoxin:CoB-CoM heterodisulfide reductase is composed of three subunits; HdrA, HdrB and HdrC. It depends on [4Fe-4S] cluster as a cofactor. The cofactor is FAD.

Its pathway is cofactor metabolism; coenzyme M-coenzyme B heterodisulfide reduction; coenzyme B and coenzyme M from coenzyme M-coenzyme B heterodisulfide: step 1/1. Part of a complex that catalyzes the reversible reduction of CoM-S-S-CoB to the thiol-coenzymes H-S-CoM (coenzyme M) and H-S-CoB (coenzyme B). The chain is CoB--CoM heterodisulfide reductase iron-sulfur subunit A 1 (hdrA1) from Methanopyrus kandleri (strain AV19 / DSM 6324 / JCM 9639 / NBRC 100938).